The primary structure comprises 215 residues: UPF0502 protein YceH (215 aa).

It belongs to the UPF0502 family.

This chain is UPF0502 protein YceH, found in Salmonella paratyphi B (strain ATCC BAA-1250 / SPB7).